The following is a 302-amino-acid chain: Porphobilinogen deaminase (302 aa).

C234 is modified (S-(dipyrrolylmethanemethyl)cysteine).

Belongs to the HMBS family. In terms of assembly, monomer. It depends on dipyrromethane as a cofactor.

It catalyses the reaction 4 porphobilinogen + H2O = hydroxymethylbilane + 4 NH4(+). The protein operates within porphyrin-containing compound metabolism; protoporphyrin-IX biosynthesis; coproporphyrinogen-III from 5-aminolevulinate: step 2/4. Functionally, tetrapolymerization of the monopyrrole PBG into the hydroxymethylbilane pre-uroporphyrinogen in several discrete steps. This Corynebacterium glutamicum (strain R) protein is Porphobilinogen deaminase.